A 403-amino-acid polypeptide reads, in one-letter code: Peroxisomal membrane protein PEX13 (403 aa).

Residues 1-11 (MASQPPPPPKP) are compositionally biased toward pro residues. A disordered region spans residues 1 to 69 (MASQPPPPPK…SQQTGSGNLN (69 aa)). Residues 1 to 134 (MASQPPPPPK…SSRGAFQSIE (134 aa)) are Peroxisomal matrix-facing. Over residues 59-69 (PSQQTGSGNLN) the composition is skewed to polar residues. The helical transmembrane segment at 135–155 (SIVHAFASVSMMMDATFSAVY) threads the bilayer. Positions 145-233 (MMMDATFSAV…EDRAANSAKS (89 aa)) are targeting to peroxisomes. Topologically, residues 156 to 174 (NSFRAVLDVANHFSRLKIH) are cytoplasmic. A helical transmembrane segment spans residues 175–192 (FTKVFSAFALVRTIRYLY). Positions 175 to 196 (FTKVFSAFALVRTIRYLYRRLQ) are interaction with PEX19. Topologically, residues 193–233 (RRLQWMIGLRRGLENEDLWAESEGTVACLGAEDRAANSAKS) are peroxisomal matrix. The chain crosses the membrane as a helical span at residues 234-254 (WPIFLFFAVILGGPYLIWKLL). Over 255–403 (STHSDEVTDS…TGKNGDKQDL (149 aa)) the chain is Cytoplasmic. Positions 272 to 336 (DDHVVARAEY…PANYVKILGK (65 aa)) constitute an SH3 domain. Phosphoserine is present on S354.

Belongs to the peroxin-13 family. Interacts (via SH3 domain) with PEX14 (via SH3-binding motif); forming the PEX13-PEX14 docking complex. Interacts with PEX19.

The protein resides in the peroxisome membrane. Functionally, component of the PEX13-PEX14 docking complex, a translocon channel that specifically mediates the import of peroxisomal cargo proteins bound to PEX5 receptor. The PEX13-PEX14 docking complex forms a large import pore which can be opened to a diameter of about 9 nm. Mechanistically, PEX5 receptor along with cargo proteins associates with the PEX14 subunit of the PEX13-PEX14 docking complex in the cytosol, leading to the insertion of the receptor into the organelle membrane with the concomitant translocation of the cargo into the peroxisome matrix. Involved in the import of PTS1- and PTS2-type containing proteins. This chain is Peroxisomal membrane protein PEX13 (PEX13), found in Bos taurus (Bovine).